Consider the following 636-residue polypeptide: MGILNSISTPADLKALNDEDLDALAKEIRTFLVDKVAATGGHLGPNLGVVELTIGLHRVFDSPQDPIIFDTSHQSYVHKILTGRAKDFDSLRQKDGLSGYTCRAESEHDWTESSHASAALSYADGLSKAKQLDGDTTHSVVAVVGDGALTGGMCWEALNNIAAGKDRKVVVVVNDNGRSYSPTIGGFAENLAGLRMQPFYDRFMEKGKTSLKSMGWVGERTFEALHAFKEGVKSTVIPTEMFPELGMKYVGPVDGHNQKAVDNALKYAHDYDGPIIVHMVTEKGRGYAPAEQDLDELMHSTGVIDPLTGAPKSASKPGWTSVFSDELVKIGAQNENVVAITAAMAGPTGLSKFEANFPNRFFDVGIAEQHAVTSAAGLALGGKHPVVAIYSTFLNRAFDQLLMDVGMLNQPVTLVLDRSGVTGSDGASHNGVWDMALTSIVPGVQVAAPRDEDSLRELLNEAISIDDGPTVVRFPKGDLPTPIVAIDTLEDGVDVLAYEDATDVESTDDAPSVLIIAVGERATVALDVASRIKQHGVNVTVVDPRWIVPIPQSLVALSDDHDLVITIEDGVIHGGVGSLLSDALNASEVDTPRRQIAVPQKYLDHASRNEVLADYGLDADGIETTVVGWLDSLFGE.

Thiamine diphosphate contacts are provided by residues H73 and 114-116 (SHA). D146 is a binding site for Mg(2+). Thiamine diphosphate-binding positions include 147–148 (GA), N176, Y287, and E368. Residue N176 participates in Mg(2+) binding.

This sequence belongs to the transketolase family. DXPS subfamily. Homodimer. Mg(2+) is required as a cofactor. Requires thiamine diphosphate as cofactor.

It catalyses the reaction D-glyceraldehyde 3-phosphate + pyruvate + H(+) = 1-deoxy-D-xylulose 5-phosphate + CO2. It functions in the pathway metabolic intermediate biosynthesis; 1-deoxy-D-xylulose 5-phosphate biosynthesis; 1-deoxy-D-xylulose 5-phosphate from D-glyceraldehyde 3-phosphate and pyruvate: step 1/1. Its function is as follows. Catalyzes the acyloin condensation reaction between C atoms 2 and 3 of pyruvate and glyceraldehyde 3-phosphate to yield 1-deoxy-D-xylulose-5-phosphate (DXP). This chain is 1-deoxy-D-xylulose-5-phosphate synthase, found in Corynebacterium glutamicum (strain ATCC 13032 / DSM 20300 / JCM 1318 / BCRC 11384 / CCUG 27702 / LMG 3730 / NBRC 12168 / NCIMB 10025 / NRRL B-2784 / 534).